A 117-amino-acid polypeptide reads, in one-letter code: Large ribosomal subunit protein bL20 (117 aa).

This sequence belongs to the bacterial ribosomal protein bL20 family.

In terms of biological role, binds directly to 23S ribosomal RNA and is necessary for the in vitro assembly process of the 50S ribosomal subunit. It is not involved in the protein synthesizing functions of that subunit. The chain is Large ribosomal subunit protein bL20 from Vibrio atlanticus (strain LGP32) (Vibrio splendidus (strain Mel32)).